A 92-amino-acid polypeptide reads, in one-letter code: Small ribosomal subunit protein uS19 (92 aa).

It belongs to the universal ribosomal protein uS19 family.

In terms of biological role, protein S19 forms a complex with S13 that binds strongly to the 16S ribosomal RNA. This Streptococcus thermophilus (strain ATCC BAA-491 / LMD-9) protein is Small ribosomal subunit protein uS19.